A 947-amino-acid chain; its full sequence is Microtubule cross-linking factor 3 (947 aa).

Positions 1–21 (MSQPPIGGAAPATAAASPAAA) are cleaved as a signal peptide. Disordered stretches follow at residues 1–251 (MSQP…SYWK), 266–368 (KERA…TLKN), and 496–524 (LSLKRRGSKDLPKSEKKAQQTPTEEDNED). Low complexity-rich tracts occupy residues 9–24 (AAPATAAASPAAAATE), 72–81 (QQQLQQQQQQ), and 109–137 (APKGAAPGAVQPVAGAEAAPAATLAALGG). Basic and acidic residues predominate over residues 141 to 151 (GPPEEPPRELE). The span at 164 to 180 (GEGGGGGGEGGGAGGGS) shows a compositional bias: gly residues. Residues 214–236 (ASPSPSSSSAGKTPGTGSRNSGS) show a composition bias toward low complexity. A compositionally biased stretch (gly residues) spans 237–248 (GVAGGGSGGGGS). 2 stretches are compositionally biased toward low complexity: residues 287 to 297 (SSRSSPVSGPP) and 304 to 325 (AVASASPMAAAAEGPQQSAEGS). Positions 342-726 (HPQQLQEQEE…GKVMQLQYEN (385 aa)) form a coiled coil. 2 stretches are compositionally biased toward basic and acidic residues: residues 355–368 (EMEKLREENETLKN) and 496–513 (LSLKRRGSKDLPKSEKKA). Ser-569 is subject to Phosphoserine. A disordered region spans residues 743 to 786 (GIRGSPRDSDAESDAGKKESDDDSRPPHRKREGPIGGESDSEEV). A compositionally biased stretch (basic and acidic residues) spans 747–768 (SPRDSDAESDAGKKESDDDSRP). Ser-781 is modified (phosphoserine). A coiled-coil region spans residues 811-835 (DRQQMKDIRSEAERLGKTIDRLIAD). A helical membrane pass occupies residues 915-935 (PIILLILILVLFSSLSYTTIF).

The protein belongs to the MTCL family.

It is found in the membrane. The polypeptide is Microtubule cross-linking factor 3 (Homo sapiens (Human)).